A 476-amino-acid polypeptide reads, in one-letter code: 3-isopropylmalate dehydratase large subunit (476 aa).

[4Fe-4S] cluster contacts are provided by Cys347, Cys407, and Cys410. The disordered stretch occupies residues 418 to 442 (LAPGERSASTSNRNFEGRQGKGGRT).

It belongs to the aconitase/IPM isomerase family. LeuC type 1 subfamily. Heterodimer of LeuC and LeuD. The cofactor is [4Fe-4S] cluster.

It catalyses the reaction (2R,3S)-3-isopropylmalate = (2S)-2-isopropylmalate. Its pathway is amino-acid biosynthesis; L-leucine biosynthesis; L-leucine from 3-methyl-2-oxobutanoate: step 2/4. In terms of biological role, catalyzes the isomerization between 2-isopropylmalate and 3-isopropylmalate, via the formation of 2-isopropylmaleate. The polypeptide is 3-isopropylmalate dehydratase large subunit (Streptomyces coelicolor (strain ATCC BAA-471 / A3(2) / M145)).